Reading from the N-terminus, the 198-residue chain is Imidazoleglycerol-phosphate dehydratase (198 aa).

This sequence belongs to the imidazoleglycerol-phosphate dehydratase family.

Its subcellular location is the cytoplasm. The enzyme catalyses D-erythro-1-(imidazol-4-yl)glycerol 3-phosphate = 3-(imidazol-4-yl)-2-oxopropyl phosphate + H2O. It participates in amino-acid biosynthesis; L-histidine biosynthesis; L-histidine from 5-phospho-alpha-D-ribose 1-diphosphate: step 6/9. The protein is Imidazoleglycerol-phosphate dehydratase of Gluconobacter oxydans (strain 621H) (Gluconobacter suboxydans).